Here is a 124-residue protein sequence, read N- to C-terminus: MAITKEELLDYIGGLSVLELSELVKAFEEKFGVSAAPTVVAGAGAGVAAAAVEEKTEFDVILLDGGEKKINVIKVVRELTGLGLKEAKDAVEKTPTTIKEGANKDDAAAMKAKLEEAGAKVEIK.

This sequence belongs to the bacterial ribosomal protein bL12 family. As to quaternary structure, homodimer. Part of the ribosomal stalk of the 50S ribosomal subunit. Forms a multimeric L10(L12)X complex, where L10 forms an elongated spine to which 2 to 4 L12 dimers bind in a sequential fashion. Binds GTP-bound translation factors.

In terms of biological role, forms part of the ribosomal stalk which helps the ribosome interact with GTP-bound translation factors. Is thus essential for accurate translation. The protein is Large ribosomal subunit protein bL12 of Wolinella succinogenes (strain ATCC 29543 / DSM 1740 / CCUG 13145 / JCM 31913 / LMG 7466 / NCTC 11488 / FDC 602W) (Vibrio succinogenes).